We begin with the raw amino-acid sequence, 84 residues long: Toxin-like TcoNTxP1 (84 aa).

Positions 1–19 (MKRMILFTSCLLLIDIVVG) are cleaved as a signal peptide. Residues 21 to 82 (KEGYPADSKG…VWDSATNKCG (62 aa)) form the LCN-type CS-alpha/beta domain. Cystine bridges form between cysteine 31/cysteine 81, cysteine 35/cysteine 57, cysteine 43/cysteine 62, and cysteine 47/cysteine 64. A Cysteine amide modification is found at cysteine 81. Residues 82-84 (GKK) constitute a propeptide that is removed on maturation.

In terms of tissue distribution, expressed by the venom gland.

The protein resides in the secreted. Functionally, this protein is not toxic. It induces an immune response similar to that induced by whole venom. Thus, polyclonal antibodies raised against this protein can neutralize the effects of the venom. The protein is Toxin-like TcoNTxP1 of Tityus costatus (Brazilian scorpion).